A 384-amino-acid chain; its full sequence is V-type proton ATPase subunit C (384 aa).

Belongs to the V-ATPase C subunit family. V-ATPase is a heteromultimeric enzyme made up of two complexes: the ATP-hydrolytic V1 complex and the proton translocation V0 complex. The V1 complex consists of three catalytic AB heterodimers that form a heterohexamer, three peripheral stalks each consisting of EG heterodimers, one central rotor including subunits D and F, and the regulatory subunits C and H. The proton translocation complex V0 consists of the proton transport subunit a, a ring of proteolipid subunits c9c'', rotary subunit d, subunits e and f, and the accessory subunits vah-19/Ac45 and vah-20/PRR. Interacts with V-type proton ATPase subunits a1 unc-32, a2 vha-5 and a3 vha-6. Expressed ubiquitously; higher levels are found in gastrointestinal and hypodermal cells, as well as H-shaped excretory cell.

The protein resides in the cytoplasm. Its subcellular location is the membrane. Subunit of the V1 complex of vacuolar(H+)-ATPase (V-ATPase), a multisubunit enzyme composed of a peripheral complex (V1) that hydrolyzes ATP and a membrane integral complex (V0) that translocates protons. V-ATPase is responsible for acidifying and maintaining the pH of intracellular compartments and in some cell types, is targeted to the plasma membrane, where it is responsible for acidifying the extracellular environment. Subunit C is necessary for the assembly of the catalytic sector of the enzyme and is likely to have a specific function in its catalytic activity. Has roles in embryogenesis and ovulation. The sequence is that of V-type proton ATPase subunit C from Caenorhabditis elegans.